The primary structure comprises 479 residues: UDP-glycosyltransferase 85A8 (479 aa).

UDP-alpha-D-glucose is bound by residues S302, 358 to 359 (WC), 376 to 384 (HSGWNSTIE), and 398 to 401 (FAEQ).

Belongs to the UDP-glycosyltransferase family.

Its function is as follows. May glycosylate diterpenes or flavonols in leaves. The chain is UDP-glycosyltransferase 85A8 from Stevia rebaudiana (Stevia).